Reading from the N-terminus, the 504-residue chain is Facilitated trehalose transporter Tret1 (504 aa).

Residues 1–39 lie on the Cytoplasmic side of the membrane; the sequence is MELNNKEDSPRHTVPFVRQITEDGKAKLEIYRPTTNPIY. Residues 40–60 form a helical membrane-spanning segment; sequence IYTQILAAIAVSMGSMVVGFA. At 61–87 the chain is on the extracellular side; it reads SAYTSPALVSMQNTTITSFKVTEQEAS. N-linked (GlcNAc...) asparagine glycosylation is present at asparagine 73. The chain crosses the membrane as a helical span at residues 88–108; the sequence is WVGGIMPLAGLAGGIAGGPFI. The Cytoplasmic portion of the chain corresponds to 109 to 120; it reads EYLGRKNTILAT. Residues 121–141 traverse the membrane as a helical segment; sequence AVPFIVAWLLIAFANSIWMVL. Residues 142 to 145 are Extracellular-facing; sequence AGRA. The helical transmembrane segment at 146-166 threads the bilayer; the sequence is LSGFCVGIASLSLPVYLGETV. Residues 167–171 are Cytoplasmic-facing; sequence QPEVR. A helical membrane pass occupies residues 172–192; the sequence is GTLGLLPTAFGNIGILICFVA. Residues 193-199 are Extracellular-facing; sequence GKYVNWS. A glycan (N-linked (GlcNAc...) asparagine) is linked at asparagine 197. The chain crosses the membrane as a helical span at residues 200-220; the sequence is GLAFIGSILPIPFMVLTLLIP. The Cytoplasmic portion of the chain corresponds to 221-283; the sequence is ETPRWFVTRG…DLMKRSNLKP (63 aa). The chain crosses the membrane as a helical span at residues 284-304; it reads LLIALGLMFFQQLSGINAVIF. Topologically, residues 305–320 are extracellular; the sequence is YTVSIFKDAGSTIDEN. Residues 321-341 traverse the membrane as a helical segment; that stretch reads LCTIIVGVVNFGATFFATVLI. Residues 342-347 are Cytoplasmic-facing; the sequence is DRLGRK. The helical transmembrane segment at 348-368 threads the bilayer; that stretch reads ILLYISEVAMVITLLTLGTFF. The Extracellular segment spans residues 369-387; it reads YYKNSGNDVSNIGWLPLAS. Residues 388–408 traverse the membrane as a helical segment; sequence FVIYVIGFSSGVGPIPWLMLG. Over 409–424 the chain is Cytoplasmic; that stretch reads EILPGKIRGSAASVAT. Residues 425–445 traverse the membrane as a helical segment; that stretch reads GFNWTCTFIVTKTFADIVAAI. Residues 446–448 are Extracellular-facing; it reads GNH. The helical transmembrane segment at 449–469 threads the bilayer; it reads GAFWFFGVICLIGLFFVIFFV. Residues 470–504 are Cytoplasmic-facing; it reads PETQGKSLEEIERKMMGRVRRMSSVANMKPLSFNM.

It belongs to the major facilitator superfamily. Sugar transporter (TC 2.A.1.1) family. Trehalose transporter subfamily. Highest expression in the fat body. Not expressed in other tissues including the midgut, muscle, and integuments after 24 hours of dehydration.

The protein localises to the cell membrane. High-capacity facilitative transporter for trehalose, required to induce anhydrobiosis. Anhydrobiotic larvae can survive almost complete dehydration. Does not transport maltose, sucrose or lactose. Mediates the bidirectional transfer of trehalose. Responsible for the transport of trehalose synthesized in the fat body and the incorporation of trehalose into other tissues that require a carbon source, thereby regulating trehalose levels in the hemolymph. The protein is Facilitated trehalose transporter Tret1 of Polypedilum vanderplanki (Sleeping chironomid midge).